A 126-amino-acid chain; its full sequence is Probable prefoldin subunit 4 (126 aa).

It belongs to the prefoldin subunit beta family. In terms of assembly, heterohexamer of two PFD-alpha type and four PFD-beta type subunits.

Its function is as follows. Binds specifically to cytosolic chaperonin (c-CPN) and transfers target proteins to it. Binds to nascent polypeptide chain and promotes folding in an environment in which there are many competing pathways for nonnative proteins. The protein is Probable prefoldin subunit 4 (pfd-4) of Caenorhabditis elegans.